Here is a 123-residue protein sequence, read N- to C-terminus: Large ribosomal subunit protein uL14 (123 aa).

The protein belongs to the universal ribosomal protein uL14 family. Part of the 50S ribosomal subunit. Forms a cluster with proteins L3 and L19. In the 70S ribosome, L14 and L19 interact and together make contacts with the 16S rRNA in bridges B5 and B8.

Its function is as follows. Binds to 23S rRNA. Forms part of two intersubunit bridges in the 70S ribosome. This is Large ribosomal subunit protein uL14 from Hamiltonella defensa subsp. Acyrthosiphon pisum (strain 5AT).